A 275-amino-acid polypeptide reads, in one-letter code: Glucosamine-6-phosphate deaminase 2 (275 aa).

The active-site Proton acceptor; for enolization step is D72. The stretch at 103-131 (NAHILDGNASDLQAECEDFERKIKEAGGI) forms a coiled coil. D141 serves as the catalytic For ring-opening step. H143 (proton acceptor; for ring-opening step) is an active-site residue. E148 serves as the catalytic For ring-opening step.

The protein belongs to the glucosamine/galactosamine-6-phosphate isomerase family. In terms of assembly, homohexamer.

It localises to the cytoplasm. It catalyses the reaction alpha-D-glucosamine 6-phosphate + H2O = beta-D-fructose 6-phosphate + NH4(+). Catalyzes the reversible conversion of alpha-D-glucosamine 6-phosphate (GlcN-6P) into beta-D-fructose 6-phosphate (Fru-6P) and ammonium ion, a regulatory reaction step in de novo uridine diphosphate-N-acetyl-alpha-D-glucosamine (UDP-GlcNAc) biosynthesis via hexosamine pathway. The protein is Glucosamine-6-phosphate deaminase 2 of Xenopus tropicalis (Western clawed frog).